The chain runs to 519 residues: MQLAELVQTSDVVARTAGRLEKIARLADALRGLAPEERLAGASWLAGELRQGRIGLGPAAVRAALEATAPADAPALAVREVDASLDRLAAARGAGSGRERAALLAALLARASADERDFLARLVLGELRQGALEGVLVEAVARAAAVPAGEVRRAVMMAGALPPVAEAALAEGAAGLSRFRLRLLEPVQPMLAQPAAGVDEALAALGEAALEWKLDGARVQVHKDGGEVRVFSRALRDVTPAVPEVVEAVRRLPASSLVLDGEAIALRGDGAPEPFQVTMRRFGRKLDVAGLREGVPLSVLFFDALHTAGEDLIARPASERHLALAAAVPDALRVPRLVTSDGAAAAAFLEGALARGHEGLLAKSLTAPYEAGRRGASWLKVKRAHTLDLVVLAAEWGSGRREGFLSNLHLGARDPEGGGFVMLGKTFKGMTDAMLAWQTERFRALALGSTDGYVVHLRPELVVEVAFDGLQESSRYPGGLALRFARVKRYREDKRPEEADTIATVRALHARQVAAERGT.

Residue E211 coordinates ATP. Catalysis depends on K213, which acts as the N6-AMP-lysine intermediate. ATP is bound by residues R218, R233, E262, F302, R374, and K380.

This sequence belongs to the ATP-dependent DNA ligase family. Mg(2+) serves as cofactor.

The catalysed reaction is ATP + (deoxyribonucleotide)n-3'-hydroxyl + 5'-phospho-(deoxyribonucleotide)m = (deoxyribonucleotide)n+m + AMP + diphosphate.. Functionally, DNA ligase that seals nicks in double-stranded DNA during DNA replication, DNA recombination and DNA repair. The polypeptide is Probable DNA ligase (Anaeromyxobacter sp. (strain Fw109-5)).